The sequence spans 189 residues: dCTP deaminase (189 aa).

DCTP contacts are provided by residues K112–R117, T136–E138, Q157, Y171, and Q181. E138 functions as the Proton donor/acceptor in the catalytic mechanism.

This sequence belongs to the dCTP deaminase family. Homotrimer.

It catalyses the reaction dCTP + H2O + H(+) = dUTP + NH4(+). It participates in pyrimidine metabolism; dUMP biosynthesis; dUMP from dCTP (dUTP route): step 1/2. Catalyzes the deamination of dCTP to dUTP. This is dCTP deaminase from Xanthomonas oryzae pv. oryzae (strain MAFF 311018).